A 537-amino-acid polypeptide reads, in one-letter code: Light-independent protochlorophyllide reductase subunit B (537 aa).

Residue Asp-36 coordinates [4Fe-4S] cluster. Asp-292 (proton donor) is an active-site residue. 428-429 (GL) is a substrate binding site. Residues 459–483 (TAGETAGQATEAATAPATPGAPLTG) are disordered.

It belongs to the ChlB/BchB/BchZ family. Protochlorophyllide reductase is composed of three subunits; BchL, BchN and BchB. Forms a heterotetramer of two BchB and two BchN subunits. [4Fe-4S] cluster is required as a cofactor.

The catalysed reaction is chlorophyllide a + oxidized 2[4Fe-4S]-[ferredoxin] + 2 ADP + 2 phosphate = protochlorophyllide a + reduced 2[4Fe-4S]-[ferredoxin] + 2 ATP + 2 H2O. It functions in the pathway porphyrin-containing compound metabolism; bacteriochlorophyll biosynthesis (light-independent). Its function is as follows. Component of the dark-operative protochlorophyllide reductase (DPOR) that uses Mg-ATP and reduced ferredoxin to reduce ring D of protochlorophyllide (Pchlide) to form chlorophyllide a (Chlide). This reaction is light-independent. The NB-protein (BchN-BchB) is the catalytic component of the complex. In Chloroherpeton thalassium (strain ATCC 35110 / GB-78), this protein is Light-independent protochlorophyllide reductase subunit B.